The chain runs to 278 residues: MQTYKVVVLGASGTGKTSLTVRFVNGDFVETYDPTIEDLYRKVIETNKGEHIMLEIMDTSGTERYLAMRDLYIRNAQAFVLVYSITSRVSLLELENIKNYICQVKDRPISQIPMVVLGNKCDLEDTRVVFPEEVEALTKKWGIEDFLETSAKIDMNIQSAYDCLTLQLMSKQSFLNGSSNGKDKKDKKEKKTHKKDSGSNNSSINSSSSSLSVSGGSNLSISSSCSSSSFSNLSNSTSSTSVNNLNQSQTNAPIRTKSKRSLKSAKVDKNPKGKCLIM.

A GTP-binding site is contributed by 10–17 (GASGTGKT). The Effector region signature appears at 32 to 40 (YDPTIEDLY). GTP contacts are provided by residues 58-62 (DTSGT) and 119-122 (NKCD). Disordered regions lie at residues 176–209 (NGSS…SSSS) and 236–278 (STSS…CLIM). Low complexity-rich tracts occupy residues 198–209 (GSNNSSINSSSS) and 236–251 (STSS…SQTN). At Cys275 the chain carries Cysteine methyl ester. Residue Cys275 is the site of S-geranylgeranyl cysteine attachment. Positions 276 to 278 (LIM) are cleaved as a propeptide — removed in mature form.

The protein belongs to the small GTPase superfamily. Ras family.

It localises to the cell membrane. It carries out the reaction GTP + H2O = GDP + phosphate + H(+). This chain is Ras-related protein rapC (rapC), found in Dictyostelium discoideum (Social amoeba).